The primary structure comprises 235 residues: 2-C-methyl-D-erythritol 4-phosphate cytidylyltransferase (235 aa).

Belongs to the IspD/TarI cytidylyltransferase family. IspD subfamily. Homodimer.

The catalysed reaction is 2-C-methyl-D-erythritol 4-phosphate + CTP + H(+) = 4-CDP-2-C-methyl-D-erythritol + diphosphate. It functions in the pathway isoprenoid biosynthesis; isopentenyl diphosphate biosynthesis via DXP pathway; isopentenyl diphosphate from 1-deoxy-D-xylulose 5-phosphate: step 2/6. Catalyzes the formation of 4-diphosphocytidyl-2-C-methyl-D-erythritol from CTP and 2-C-methyl-D-erythritol 4-phosphate (MEP). This is 2-C-methyl-D-erythritol 4-phosphate cytidylyltransferase from Blochmanniella pennsylvanica (strain BPEN).